We begin with the raw amino-acid sequence, 270 residues long: Tetraspanin-2 (270 aa).

At 1 to 8 (MALANNLT) the chain is on the cytoplasmic side. A helical membrane pass occupies residues 9–29 (AILNLLALLCSIPITASGIWL). Topologically, residues 30–42 (ASKPDNECVNLLR) are extracellular. Residues 43–63 (WPVVVLGVLILVVSATGFIGA) traverse the membrane as a helical segment. Topologically, residues 64–74 (YKYKETLLAVY) are cytoplasmic. Residues 75-95 (LCCMAILIGLLLVVLIFAFVV) form a helical membrane-spanning segment. The Extracellular segment spans residues 96 to 232 (TRPDGSYRVP…NLRKEWRKAN (137 aa)). A helical transmembrane segment spans residues 233–253 (LILIITVVVLIWVYVIACSAF). Topologically, residues 254-270 (RNAQTEDLFRKYKQGWV) are cytoplasmic.

This sequence belongs to the tetraspanin (TM4SF) family.

The protein resides in the membrane. May be involved in the regulation of cell differentiation. This is Tetraspanin-2 (TET2) from Arabidopsis thaliana (Mouse-ear cress).